Consider the following 653-residue polypeptide: MGCSSSSTKTRRSDTSLRAALIIQNWYRGYKARLKARQHYALTIFQSIEYADEQGQMQLSTFFSFMLENYTHIHKEELELRNQSLESEQDMRDRWDYVDSIDVPDSYNGPRLQFPLTCTDIDLLLEAFKEQQILHAHYVLEVLFETKKVLKQMPNFTHIQTSPSKEVTICGDLHGKLDDLFLIFYKNGLPSERNPYVFNGDFVDRGKNSIEILMILCVSFLVYPNDLHLNRGNHEDFMMNLRYGFTKEILHKYKLHGKRILQILEEFYAWLPIGTIVDNEILVIHGGISETTDLNLLHRVERNKMKSVLIPPTETNRDHDTDSKHNKVGVTFNAHGRIKTNGSPTEHLTEHEWEQIIDILWSDPRGKNGCFPNTCRGGGCYFGPDVTSKILNKYQLKMLIRSHECKPEGYEICHDGKVVTIFSASNYYEEGSNRGAYIKLCSGTTPRFFQYQVTKATCFQPLRQRVDTMENSAIKILRERVISRKSDLTRAFQLQDHRKSGKLSVSQWAFCMENILGLNLPWRSLSSNLVNIDQNGNVEYMSSFQNIRIEKPVQEAHSTLVETLYRYRSDLEIIFNAIDTDHSGLISVEEFRAMWKLFSSHYNVHIDDSQVNKLANIMDLNKDGSIDFNEFLKAFYVVHRYEDLMKPDVTNLG.

One can recognise an IQ domain in the interval 16 to 45 (SLRAALIIQNWYRGYKARLKARQHYALTIF). The catalytic stretch occupies residues 121–455 (IDLLLEAFKE…PRFFQYQVTK (335 aa)). The Mn(2+) site is built by Asp172, His174, Asp201, and Asn233. The active-site Proton donor is the His234. Mn(2+) contacts are provided by His285 and His403. 3 EF-hand domains span residues 483–518 (SRKSDLTRAFQLQDHRKSGKLSVSQWAFCMENILGL), 566–601 (RYRSDLEIIFNAIDTDHSGLISVEEFRAMWKLFSSH), and 606–641 (IDDSQVNKLANIMDLNKDGSIDFNEFLKAFYVVHRY). Residues Asp579, Asp581, Ser583, Glu590, Asp619, Asn621, Asp623, Ser625, and Glu630 each coordinate Ca(2+).

Belongs to the PPP phosphatase family. Mn(2+) is required as a cofactor. Requires Mg(2+) as cofactor. In terms of tissue distribution, detected in retina and retinal derived Y-79 retinoblastoma cells. Also found in fetal brain.

It carries out the reaction O-phospho-L-seryl-[protein] + H2O = L-seryl-[protein] + phosphate. It catalyses the reaction O-phospho-L-threonyl-[protein] + H2O = L-threonyl-[protein] + phosphate. With respect to regulation, activated by calcium. May have a role in the recovery or adaptation response of photoreceptors. May have a role in development. The protein is Serine/threonine-protein phosphatase with EF-hands 1 (PPEF1) of Homo sapiens (Human).